The following is a 550-amino-acid chain: Arginine--tRNA ligase (550 aa).

The 'HIGH' region signature appears at 130 to 140; it reads ANPTGPIHLGG.

The protein belongs to the class-I aminoacyl-tRNA synthetase family. As to quaternary structure, monomer.

Its subcellular location is the cytoplasm. It catalyses the reaction tRNA(Arg) + L-arginine + ATP = L-arginyl-tRNA(Arg) + AMP + diphosphate. This chain is Arginine--tRNA ligase, found in Corynebacterium diphtheriae (strain ATCC 700971 / NCTC 13129 / Biotype gravis).